Reading from the N-terminus, the 479-residue chain is Transcription factor CP2-like protein 1 (479 aa).

The interval 1 to 52 (MLFWHTQPEHYNQHNSGSYLRDVLALPIFKQEEPQLSPENGARLPPLQYVLC) is mediate transcriptional repression. A Grh/CP2 DB domain is found at 43-280 (RLPPLQYVLC…PSPSYNGSPN (238 aa)). Disordered regions lie at residues 219–248 (KPKG…YQPS) and 260–301 (WPDV…LPLG). The segment covering 221 to 245 (KGADRKQKTDREKMEKRTAQEKEKY) has biased composition (basic and acidic residues). Residues 261 to 365 (PDVPYQANNT…IRLFNAIKGR (105 aa)) are SAM2-like domain. A compositionally biased stretch (polar residues) spans 266–292 (QANNTPSPSYNGSPNSFGLREGNSSPN).

Belongs to the grh/CP2 family. CP2 subfamily. Forms homohexamers via its SAM-like domain. Interacts with Mta1; which is indispensable for Tfcp2l1-mediated self-renewal-promoting effect and endoderm-inhibiting action. In terms of tissue distribution, highly expressed in placenta, testis, small intestine, kidney and stomach. Low levels of expression in lung, mesenteric lymph nodes, muscle, ovary, and thymus. No expression was detected in brain, heart, liver, and spleen. Expressed in eccrine glands in the palm. Expression is prominent in both kidney collecting ducts intercalated (IC) and principal (PC) cells. Also expressed in the thick limb of Henle and connecting segments of the nephron.

The protein resides in the nucleus. Transcription factor that facilitates establishment and maintenance of pluripotency in embryonic stem cells (ESCs). With Klf2, acts as the major effector of self-renewal that mediates induction of pluripotency downstream of LIF/Stat3 and Wnt/beta-catenin signaling. Required for normal duct development in the salivary gland and kidney. Coordinates the development of the kidney collecting ducts intercalated (IC) and principal (PC) cells, which regulate acid-base and salt-water homeostasis, respectively. Regulates the expression of IC genes including subunits B1 and D2 of the V-ATPase complex, Oxgr1, Ca12, Slc4a1, Aqp6 and IC-specific transcription factor Foxi1. Also regulates the expression of Jag1 and subsequent notch signaling in the collecting duct. Jag1 initiates notch signaling in PCs but inhibits notch signaling in ICs. Acts as a transcriptional suppressor that may suppress UBP1-mediated transcriptional activation. Modulates the placental expression of CYP11A1. The chain is Transcription factor CP2-like protein 1 (Tfcp2l1) from Mus musculus (Mouse).